The following is a 526-amino-acid chain: ATP synthase subunit alpha (526 aa).

Gly-171–Thr-178 is a binding site for ATP.

The protein belongs to the ATPase alpha/beta chains family. As to quaternary structure, F-type ATPases have 2 components, CF(1) - the catalytic core - and CF(0) - the membrane proton channel. CF(1) has five subunits: alpha(3), beta(3), gamma(1), delta(1), epsilon(1). CF(0) has four main subunits: a(1), b(1), b'(1) and c(9-12).

It is found in the cell inner membrane. The enzyme catalyses ATP + H2O + 4 H(+)(in) = ADP + phosphate + 5 H(+)(out). Its function is as follows. Produces ATP from ADP in the presence of a proton gradient across the membrane. The alpha chain is a regulatory subunit. This chain is ATP synthase subunit alpha, found in Chlorobium phaeovibrioides (strain DSM 265 / 1930) (Prosthecochloris vibrioformis (strain DSM 265)).